We begin with the raw amino-acid sequence, 907 residues long: MTINKLESRNDKEAIAEEITILTKLLDDATKTMVGSASFDKITLFKKLSIEEKHQELEREIEQLTNEEMVVVSRYFSILPLLINISEDVNLAYEINYQNNNDIDYLGKLSATIELVSSQKNAQEILENVNVVPVLTAHPTQVQRKTMLDLTNHIHELLRKYRDVKAGSINKQKWYDDMRRYVELIMQTDIIREKKLKVTNEITNVMEYYNSSLIKGVTKLITEYKHLSHQKGFDLGNAKPITMGMWIGGDRDGNPFVTAETLKISALVQNEVILNYYIDKVSDLYRTFSLSTSLSTISNAVKEMADRSTDVSIYREKEPYRKAFHYIQSRLQETLIYLKNNHLEELESEDSAQILPYQSAQEFRNDLQLIKDSLLENNGSAFITGDLTELLQAVDVFGFFLASIDMRQDSSVHETCVAELLASANIVANYSDLPEEEKIAILLKELTEDPRILSATHVEKSEILQKELAIFKTARKLKDALGEDVIKQHIISHTESISDMFELAIMLKEVGLVDTDKARVQIVPLFETIEDLDNSREIMRQYLNYDIVKKWIAANHNYQEIMLGYSDSNKDGGYLSSGWALYKAQNELTEIGYDNGVKITFFHGRGGTVGRGGGPSYEAITSQPFGSIKDRIRLTEQGEVIGNKYGNKDVAYYNLEMLVSATLDRMVTRRIVNSDNLVNYRLIMDEIVADSNLIYRDLVFGNEHFYDYFFAASPIREVSSLNIGSRPAARKTITEISGLRAIPWVFSWSQNRIMFPGWYGVGSAFKHFIDKDEKNLTKLQEMYQSWPFFHSLLSNVDMVLSKSNMNIAFEYAKLCQDEETKEVFATILDEWQLTKNVILAIESHKQLLEDNSYLKASLDYRLPYFNVLNYIQIELIKRQRRGELGENLENLIHITINGVATGLRNSG.

Catalysis depends on residues His138 and Lys570.

This sequence belongs to the PEPCase type 1 family. Mg(2+) is required as a cofactor.

The catalysed reaction is oxaloacetate + phosphate = phosphoenolpyruvate + hydrogencarbonate. In terms of biological role, forms oxaloacetate, a four-carbon dicarboxylic acid source for the tricarboxylic acid cycle. The chain is Phosphoenolpyruvate carboxylase from Streptococcus mutans serotype c (strain ATCC 700610 / UA159).